The chain runs to 318 residues: HPr kinase/phosphorylase (318 aa).

Catalysis depends on residues H143 and K164. 158-165 (GKSGVGKS) serves as a coordination point for ATP. S165 is a Mg(2+) binding site. D182 serves as the catalytic Proton acceptor; for phosphorylation activity. Proton donor; for dephosphorylation activity. The important for the catalytic mechanism of both phosphorylation and dephosphorylation stretch occupies residues 206-215 (MEIRGLGILN). Residue E207 participates in Mg(2+) binding. Residue R248 is part of the active site. The interval 269 to 274 (PVKPGR) is important for the catalytic mechanism of dephosphorylation.

It belongs to the HPrK/P family. Homohexamer. It depends on Mg(2+) as a cofactor.

The enzyme catalyses [HPr protein]-L-serine + ATP = [HPr protein]-O-phospho-L-serine + ADP + H(+). It carries out the reaction [HPr protein]-O-phospho-L-serine + phosphate + H(+) = [HPr protein]-L-serine + diphosphate. Catalyzes the ATP- as well as the pyrophosphate-dependent phosphorylation of a specific serine residue in HPr, a phosphocarrier protein of the phosphoenolpyruvate-dependent sugar phosphotransferase system (PTS). HprK/P also catalyzes the pyrophosphate-producing, inorganic phosphate-dependent dephosphorylation (phosphorolysis) of seryl-phosphorylated HPr (P-Ser-HPr). This Leptospira borgpetersenii serovar Hardjo-bovis (strain JB197) protein is HPr kinase/phosphorylase.